A 477-amino-acid polypeptide reads, in one-letter code: V-type proton ATPase subunit B (477 aa).

Position 365 (R365) interacts with ATP.

Belongs to the ATPase alpha/beta chains family. In terms of assembly, V-ATPase is a heteromultimeric enzyme composed of a peripheral catalytic V1 complex (components A to H) attached to an integral membrane V0 proton pore complex (components: a, c, c', c'', d, e, f and VOA1).

The protein resides in the vacuole membrane. Its function is as follows. Non-catalytic subunit of the V1 complex of vacuolar(H+)-ATPase (V-ATPase), a multisubunit enzyme composed of a peripheral complex (V1) that hydrolyzes ATP and a membrane integral complex (V0) that translocates protons. V-ATPase is responsible for acidifying and maintaining the pH of intracellular compartments. The polypeptide is V-type proton ATPase subunit B (Encephalitozoon cuniculi (strain GB-M1) (Microsporidian parasite)).